A 397-amino-acid chain; its full sequence is MKEKVVLAYSGGLDTSIIIPWLKENYDLDVIAVCVNVGQGDDMDYVKTKAIKSGASKIYVEDVKEEFVVDYLYKAIKSEALYEQDYMLGTSFARPLMAKKLVEIAHKEQAKYICHGCTGKGNDQVRFEVGVKAQDPTIKIIAPWRIWDIKSREDAIDYAKKVGVEVPVTKKKIYSVDKNLWHVSHEGGDLEDLKNEHKEDMYFMVTPPEKAKDEPTYLEIYFEKGAPVKINGEFLNPVDIIDKLNTIGGENGIGIADIIENRLVGMKSRGIYETPAGTLLYAAHKKLESVTLDKYTYQYKKLVSAQYGELVYNGLWFTALREAIDAFVDKTQENVTGTVKLKLYKGNIKPCSVDTEYALYDEGISSFGESELYSHKDAEGFINLFGLPCKIKALKNF.

A8–S16 is an ATP binding site. L-citrulline is bound by residues Y86 and S91. G116 contacts ATP. L-aspartate is bound by residues T118, N122, and D123. An L-citrulline-binding site is contributed by N122. Residues R126, S175, S184, E260, and Y272 each contribute to the L-citrulline site.

Belongs to the argininosuccinate synthase family. Type 1 subfamily. Homotetramer.

It localises to the cytoplasm. The catalysed reaction is L-citrulline + L-aspartate + ATP = 2-(N(omega)-L-arginino)succinate + AMP + diphosphate + H(+). Its pathway is amino-acid biosynthesis; L-arginine biosynthesis; L-arginine from L-ornithine and carbamoyl phosphate: step 2/3. The sequence is that of Argininosuccinate synthase from Clostridium botulinum (strain 657 / Type Ba4).